A 59-amino-acid chain; its full sequence is MNVQRAKEISESAEQANVSFQGMPVMIQHVDENSETARIYDAANPERELTVPVKSLEER.

The protein belongs to the SspH family.

The protein resides in the spore core. In Bacillus cytotoxicus (strain DSM 22905 / CIP 110041 / 391-98 / NVH 391-98), this protein is Small, acid-soluble spore protein H 2.